The following is a 104-amino-acid chain: MSVQGIDGVLQQMQVKALQASGTPIARPSVEPGFASELKAAIDKISDTQQTARTQAEKFTLGVPGVALNDVMVDLQKSSISMQMGIQVRNKLVSAYQEVMNMSV.

This sequence belongs to the FliE family.

Its subcellular location is the bacterial flagellum basal body. In Pectobacterium carotovorum subsp. carotovorum (strain PC1), this protein is Flagellar hook-basal body complex protein FliE.